Reading from the N-terminus, the 366-residue chain is MTPEHLPTEQYEAQLAEKVVRLQSMMAPFSNLVPEVFRSPVSHYRMRAEFRIWHDGDDLYHIIFDQQTKSRIRVDSFPAASELINQLMSAMIAGVRNNPVLRHKLFQIDYLTTLSNQAVVSLLYHKKLNDEWRQQAEALRDALRAQNLNVHLIGRATKTKIELDQDYIDERLPVAGKEMIYRQVENSFTQPNAAMNIQMLEWALDVTKGSKGDLLELYCGNGNFSLALARNFDRVLATEIAKPSVAAAQYNIAANHIDNVQIIRMAAEEFTQAMNGVREFHRLQGIDLKSYQCETIFVDPPRSGLDSETEKMVQAYPRILYISCNPETLCKNLETLSQTHKVERLALFDQFPYTHHMECGVLLTAK.

5 residues coordinate S-adenosyl-L-methionine: glutamine 190, tyrosine 218, asparagine 223, glutamate 239, and aspartate 299. The active-site Nucleophile is cysteine 324. Glutamate 358 serves as the catalytic Proton acceptor.

Belongs to the class I-like SAM-binding methyltransferase superfamily. RNA M5U methyltransferase family. TrmA subfamily.

It carries out the reaction uridine(54) in tRNA + S-adenosyl-L-methionine = 5-methyluridine(54) in tRNA + S-adenosyl-L-homocysteine + H(+). The enzyme catalyses uridine(341) in tmRNA + S-adenosyl-L-methionine = 5-methyluridine(341) in tmRNA + S-adenosyl-L-homocysteine + H(+). Dual-specificity methyltransferase that catalyzes the formation of 5-methyluridine at position 54 (m5U54) in all tRNAs, and that of position 341 (m5U341) in tmRNA (transfer-mRNA). The polypeptide is tRNA/tmRNA (uracil-C(5))-methyltransferase (Escherichia coli O7:K1 (strain IAI39 / ExPEC)).